Consider the following 115-residue polypeptide: Large ribosomal subunit protein bL19 (115 aa).

It belongs to the bacterial ribosomal protein bL19 family.

Its function is as follows. This protein is located at the 30S-50S ribosomal subunit interface and may play a role in the structure and function of the aminoacyl-tRNA binding site. The sequence is that of Large ribosomal subunit protein bL19 from Aeromonas hydrophila subsp. hydrophila (strain ATCC 7966 / DSM 30187 / BCRC 13018 / CCUG 14551 / JCM 1027 / KCTC 2358 / NCIMB 9240 / NCTC 8049).